We begin with the raw amino-acid sequence, 282 residues long: Protease HtpX homolog (282 aa).

The next 2 helical transmembrane spans lie at 6–26 and 29–49; these read TLVL…LIGG and GATF…FFSH. Histidine 130 contributes to the Zn(2+) binding site. Glutamate 131 is a catalytic residue. Position 134 (histidine 134) interacts with Zn(2+). Helical transmembrane passes span 140–160 and 180–200; these read ILIS…AQMA and IVAL…QLAI. Glutamate 205 is a Zn(2+) binding site.

It belongs to the peptidase M48B family. Zn(2+) is required as a cofactor.

It localises to the cell inner membrane. The polypeptide is Protease HtpX homolog (Thermodesulfovibrio yellowstonii (strain ATCC 51303 / DSM 11347 / YP87)).